Reading from the N-terminus, the 363-residue chain is 3-isopropylmalate dehydrogenase (363 aa).

Residue 78-91 (GPKWEHLPPDQQPE) coordinates NAD(+). The substrate site is built by Arg-99, Arg-109, Arg-138, and Asp-227. Mg(2+)-binding residues include Asp-227, Asp-251, and Asp-255. An NAD(+)-binding site is contributed by 285 to 297 (GSAPDIAGKNIAN).

It belongs to the isocitrate and isopropylmalate dehydrogenases family. LeuB type 1 subfamily. Homodimer. The cofactor is Mg(2+). Mn(2+) serves as cofactor.

It is found in the cytoplasm. It carries out the reaction (2R,3S)-3-isopropylmalate + NAD(+) = 4-methyl-2-oxopentanoate + CO2 + NADH. The protein operates within amino-acid biosynthesis; L-leucine biosynthesis; L-leucine from 3-methyl-2-oxobutanoate: step 3/4. In terms of biological role, catalyzes the oxidation of 3-carboxy-2-hydroxy-4-methylpentanoate (3-isopropylmalate) to 3-carboxy-4-methyl-2-oxopentanoate. The product decarboxylates to 4-methyl-2 oxopentanoate. The chain is 3-isopropylmalate dehydrogenase from Escherichia coli O157:H7.